A 145-amino-acid chain; its full sequence is D-aminoacyl-tRNA deacylase (145 aa).

Residues 137–138 carry the Gly-cisPro motif, important for rejection of L-amino acids motif; sequence GP.

It belongs to the DTD family. In terms of assembly, homodimer.

The protein resides in the cytoplasm. The enzyme catalyses glycyl-tRNA(Ala) + H2O = tRNA(Ala) + glycine + H(+). It carries out the reaction a D-aminoacyl-tRNA + H2O = a tRNA + a D-alpha-amino acid + H(+). Functionally, an aminoacyl-tRNA editing enzyme that deacylates mischarged D-aminoacyl-tRNAs. Also deacylates mischarged glycyl-tRNA(Ala), protecting cells against glycine mischarging by AlaRS. Acts via tRNA-based rather than protein-based catalysis; rejects L-amino acids rather than detecting D-amino acids in the active site. By recycling D-aminoacyl-tRNA to D-amino acids and free tRNA molecules, this enzyme counteracts the toxicity associated with the formation of D-aminoacyl-tRNA entities in vivo and helps enforce protein L-homochirality. The protein is D-aminoacyl-tRNA deacylase of Serratia proteamaculans (strain 568).